A 335-amino-acid chain; its full sequence is DNA polymerase beta (335 aa).

Residue Lys41 forms a Glycyl lysine isopeptide (Lys-Gly) (interchain with G-Cter in ubiquitin) linkage. Lys60 is a binding site for K(+). A Na(+)-binding site is contributed by Lys60. Lys61 is covalently cross-linked (Glycyl lysine isopeptide (Lys-Gly) (interchain with G-Cter in ubiquitin)). 2 residues coordinate K(+): Leu62 and Val65. Residues Leu62 and Val65 each contribute to the Na(+) site. Catalysis depends on Lys72, which acts as the Nucleophile; Schiff-base intermediate with DNA; for 5'-dRP lyase activity. The residue at position 72 (Lys72) is an N6-acetyllysine. Lys81 is covalently cross-linked (Glycyl lysine isopeptide (Lys-Gly) (interchain with G-Cter in ubiquitin)). An Omega-N-methylarginine; by PRMT6 modification is found at Arg83. Residues Thr101, Val103, and Ile106 each coordinate K(+). Residues Thr101, Val103, and Ile106 each coordinate Na(+). Arg149 serves as a coordination point for a 2'-deoxyribonucleoside 5'-triphosphate. Omega-N-methylarginine; by PRMT6 is present on Arg152. A 2'-deoxyribonucleoside 5'-triphosphate contacts are provided by Ser180, Arg183, Gly189, and Asp190. The interval 183–192 (RGAESSGDMD) is DNA-binding. Mg(2+)-binding residues include Asp190, Asp192, and Asp256.

Belongs to the DNA polymerase type-X family. In terms of assembly, monomer. Binds single-stranded DNA (ssDNA). Interacts with APEX1, LIG1, LIG3, FEN1, PCNA and XRCC1. Interacts with HUWE1/ARF-BP1, STUB1/CHIP and USP47. Interacts with FAM168A. The cofactor is Mg(2+). Post-translationally, methylation by PRMT6 stimulates the polymerase activity by enhancing DNA binding and processivity. In terms of processing, ubiquitinated at Lys-41, Lys-61 and Lys-81: monoubiquitinated by HUWE1/ARF-BP1. Monoubiquitinated protein is then the target of STUB1/CHIP, which catalyzes polyubiquitination from monoubiquitin, leading to degradation by the proteasome. USP47 mediates the deubiquitination of monoubiquitinated protein, preventing polyubiquitination by STUB1/CHIP and its subsequent degradation.

It localises to the nucleus. It is found in the cytoplasm. It catalyses the reaction DNA(n) + a 2'-deoxyribonucleoside 5'-triphosphate = DNA(n+1) + diphosphate. The enzyme catalyses a 5'-end 2'-deoxyribose-2'-deoxyribonucleotide-DNA = (2E,4S)-4-hydroxypenten-2-al-5-phosphate + a 5'-end 5'-phospho-2'-deoxyribonucleoside-DNA + H(+). It carries out the reaction 2'-deoxyribonucleotide-(2'-deoxyribose 5'-phosphate)-2'-deoxyribonucleotide-DNA = a 3'-end 2'-deoxyribonucleotide-(2,3-dehydro-2,3-deoxyribose 5'-phosphate)-DNA + a 5'-end 5'-phospho-2'-deoxyribonucleoside-DNA + H(+). Repair polymerase that plays a key role in base-excision repair. During this process, the damaged base is excised by specific DNA glycosylases, the DNA backbone is nicked at the abasic site by an apurinic/apyrimidic (AP) endonuclease, and POLB removes 5'-deoxyribose-phosphate from the preincised AP site acting as a 5'-deoxyribose-phosphate lyase (5'-dRP lyase); through its DNA polymerase activity, it adds one nucleotide to the 3' end of the arising single-nucleotide gap. Conducts 'gap-filling' DNA synthesis in a stepwise distributive fashion rather than in a processive fashion as for other DNA polymerases. It is also able to cleave sugar-phosphate bonds 3' to an intact AP site, acting as an AP lyase. The sequence is that of DNA polymerase beta (Polb) from Mus musculus (Mouse).